Consider the following 244-residue polypeptide: Probable phosphatase CA_C0509 (244 aa).

Residues H8, H10, H16, H41, E74, H102, H132, D193, and H195 each coordinate Zn(2+).

This sequence belongs to the PHP family. Zn(2+) serves as cofactor.

The chain is Probable phosphatase CA_C0509 from Clostridium acetobutylicum (strain ATCC 824 / DSM 792 / JCM 1419 / IAM 19013 / LMG 5710 / NBRC 13948 / NRRL B-527 / VKM B-1787 / 2291 / W).